The sequence spans 545 residues: T-complex protein 1 subunit alpha (545 aa).

At Ser-2 the chain carries N-acetylserine.

This sequence belongs to the TCP-1 chaperonin family. In terms of assembly, heterooligomeric complex of about 850 to 900 kDa that forms two stacked rings, 12 to 16 nm in diameter.

The protein localises to the cytoplasm. Molecular chaperone; assists the folding of proteins upon ATP hydrolysis. Known to play a role, in vitro, in the folding of actin and tubulin. The polypeptide is T-complex protein 1 subunit alpha (Arabidopsis thaliana (Mouse-ear cress)).